Here is a 664-residue protein sequence, read N- to C-terminus: Acid beta-fructofuranosidase 4, vacuolar (664 aa).

The Cytoplasmic segment spans residues 1–43; it reads MASSDALLPISAREEEPLCPYTRLPMADPNQETHGPRRRRPFK. Residues 1–108 constitute a propeptide, removed in mature form; sequence MASSDALLPI…WKLSGDRNTP (108 aa). 2 short sequence motifs (critical for endoplasmic reticulum export) span residues 7-8 and 9-10; these read LL and PI. Residues 14 to 16 carry the Critical for trafficking from the trans-Golgi network to the prevacuolar compartment and from the prevacuolar compartment to the central vacuole motif; sequence EEE. Residues 44-64 form a helical; Signal-anchor for type II membrane protein membrane-spanning segment; the sequence is GLLAVSFGLLFIAFYVALIAT. Over 65–664 the chain is Lumenal; sequence HDGSRSNDEG…DEAVRALSRT (600 aa). N-linked (GlcNAc...) asparagine glycosylation occurs at Asn113. Substrate-binding positions include 132 to 135, Gln151, Trp159, 194 to 195, and 258 to 259; these read WMND, WT, and RD. Asp135 is a catalytic residue. An N-linked (GlcNAc...) (complex) asparagine glycan is attached at Asn280. Residues Glu313 and Asp346 each coordinate substrate. Asn362 and Asn498 each carry an N-linked (GlcNAc...) asparagine glycan. Cys510 and Cys558 are joined by a disulfide.

It belongs to the glycosyl hydrolase 32 family. As to quaternary structure, may be present in two forms, a 70 kDa monomer and a heterodimer of the 30 kDa and 38 kDa subunits. The ratio of the levels of the two forms within cells appears to be regulated developmentally. In terms of tissue distribution, mostly expressed in stems, roots and flowers, and, to a lower extent, in mature leaves.

It localises to the vacuole. It is found in the endoplasmic reticulum membrane. The protein resides in the golgi apparatus membrane. The protein localises to the golgi apparatus. Its subcellular location is the trans-Golgi network membrane. It localises to the prevacuolar compartment membrane. It is found in the vacuole membrane. The protein resides in the vacuole lumen. The catalysed reaction is Hydrolysis of terminal non-reducing beta-D-fructofuranoside residues in beta-D-fructofuranosides.. Its pathway is glycan biosynthesis; sucrose metabolism. Inhibited by C/VIF1 and C/VIF2. Possible role in the continued mobilization of sucrose to sink organs. Regulates root elongation. The sequence is that of Acid beta-fructofuranosidase 4, vacuolar from Arabidopsis thaliana (Mouse-ear cress).